Here is a 109-residue protein sequence, read N- to C-terminus: Avian agnoprotein 2b (109 aa).

Residues 89–109 form a disordered region; the sequence is QPALASRLTQPNRPNRGRLAK.

Its subcellular location is the host cytoplasm. The chain is Avian agnoprotein 2b from Psittacidae (parrots).